A 798-amino-acid chain; its full sequence is Nuclear intron maturase 4, mitochondrial (798 aa).

A mitochondrion-targeting transit peptide spans Met1–Tyr16. Residues Val578–Glu665 form an intron maturase type-2 region. The THAP-type zinc-finger motif lies at Cys729–His778.

The protein belongs to the plant nuclear intron maturase (nMat) family.

It is found in the mitochondrion. The protein resides in the plastid. The protein localises to the chloroplast. Functionally, nuclear-encoded maturase required for splicing of group-II introns in mitochondria. Involved in NAD1 pre-mRNA processing and maturation of introns 1, 3 and 4. Necessary for mitochondrial biogenesis during early developmental stages. Essential for respiratory holocomplex I biogenesis in mitochondria. The sequence is that of Nuclear intron maturase 4, mitochondrial from Arabidopsis thaliana (Mouse-ear cress).